A 473-amino-acid chain; its full sequence is H(+)/Cl(-) exchange transporter ClcA (473 aa).

Residues 1–32 lie on the Cytoplasmic side of the membrane; it reads MKTDTSTFLAQQIVRLRRRDQIRRLMQRDKTP. The helical transmembrane segment at 33–69 threads the bilayer; the sequence is LAILFMAAVVGTLTGLVGVAFEKAVSWVQNMRIGALV. The Periplasmic segment spans residues 70–76; it reads QVADHAF. The helical transmembrane segment at 77-100 threads the bilayer; that stretch reads LLWPLAFILSALLAMVGYFLVRKF. The Selectivity filter part_1 motif lies at 106–110; the sequence is GSGIP. Residue Ser-107 coordinates chloride. The segment at residues 109–116 is an intramembrane region (helical); it reads IPEIEGAL. Over 117-123 the chain is Cytoplasmic; sequence EELRPVR. 2 consecutive transmembrane segments (helical) span residues 124 to 141 and 148 to 166; these read WWRV…TLGA and EGPT…LDVF. Positions 146-150 match the Selectivity filter part_2 motif; the sequence is GREGP. Topologically, residues 167–176 are cytoplasmic; that stretch reads RMRSAEARHT. 2 consecutive intramembrane regions (helical) follow at residues 177–189 and 193–201; these read LLAT…LSAA and PLAGILFII. Residues 202 to 214 lie on the Cytoplasmic side of the membrane; the sequence is EEMRPQFRYNLIS. The helical transmembrane segment at 215 to 232 threads the bilayer; the sequence is IKAVFTGVIMSSIVFRIF. Topologically, residues 233-252 are periplasmic; the sequence is NGEAPIIEVGKLSDAPVNTL. Residues 253–281 traverse the membrane as a helical segment; it reads WLYLILGIIFGCVGPVFNSLVLRTQDMFQ. Topologically, residues 282–287 are cytoplasmic; it reads RFHGGE. The chain crosses the membrane as a helical span at residues 288 to 309; the sequence is IKKWVLMGGAIGGLCGILGLIE. Residues 310–329 lie on the Periplasmic side of the membrane; it reads PEAAGGGFNLIPIAAAGNFS. The next 2 helical transmembrane spans lie at 330–349 and 355–376; these read VGLL…LCFS and GIFA…MAAA. A Selectivity filter part_3 motif is present at residues 355–359; it reads GIFAP. Chloride-binding residues include Ile-356 and Phe-357. Residues 377 to 386 are Periplasmic-facing; the sequence is VLFPQYHLEA. An intramembrane region (helical) is located at residues 387–401; it reads GTFAIAGMGALMAAS. The segment at residues 402 to 404 is an intramembrane region (note=Loop between two helices); it reads VRA. Residues 405–416 constitute an intramembrane region (helical); that stretch reads PLTGIVLVLEMT. The note=Loop between two helices intramembrane region spans 417-421; it reads DNYQL. The helical transmembrane segment at 422–438 threads the bilayer; that stretch reads ILPMIITCLGATLLAQF. At 439 to 473 the chain is on the cytoplasmic side; sequence LGGKPLYSTILARTLAKQDAEQAAKNQNASAGENT. Residue Tyr-445 coordinates chloride.

Belongs to the chloride channel (TC 2.A.49) family. ClcA subfamily. As to quaternary structure, homodimer.

The protein localises to the cell inner membrane. It catalyses the reaction 2 chloride(in) + H(+)(out) = 2 chloride(out) + H(+)(in). In terms of biological role, proton-coupled chloride transporter. Functions as antiport system and exchanges two chloride ions for 1 proton. Probably acts as an electrical shunt for an outwardly-directed proton pump that is linked to amino acid decarboxylation, as part of the extreme acid resistance (XAR) response. This Salmonella choleraesuis (strain SC-B67) protein is H(+)/Cl(-) exchange transporter ClcA.